Reading from the N-terminus, the 349-residue chain is Ferredoxin--NADP reductase 1 (349 aa).

Glutamate 36, lysine 44, tyrosine 48, isoleucine 88, leucine 123, aspartate 290, and serine 331 together coordinate FAD.

It belongs to the ferredoxin--NADP reductase type 2 family. Homodimer. The cofactor is FAD.

It carries out the reaction 2 reduced [2Fe-2S]-[ferredoxin] + NADP(+) + H(+) = 2 oxidized [2Fe-2S]-[ferredoxin] + NADPH. The sequence is that of Ferredoxin--NADP reductase 1 from Bacillus mycoides (strain KBAB4) (Bacillus weihenstephanensis).